The chain runs to 90 residues: Small ribosomal subunit protein uS15 (90 aa).

It belongs to the universal ribosomal protein uS15 family. As to quaternary structure, part of the 30S ribosomal subunit. Forms a bridge to the 50S subunit in the 70S ribosome, contacting the 23S rRNA.

In terms of biological role, one of the primary rRNA binding proteins, it binds directly to 16S rRNA where it helps nucleate assembly of the platform of the 30S subunit by binding and bridging several RNA helices of the 16S rRNA. Forms an intersubunit bridge (bridge B4) with the 23S rRNA of the 50S subunit in the ribosome. The sequence is that of Small ribosomal subunit protein uS15 from Tropheryma whipplei (strain TW08/27) (Whipple's bacillus).